The primary structure comprises 297 residues: Protein COFACTOR ASSEMBLY OF COMPLEX C SUBUNIT B CCB4, chloroplastic (297 aa).

The N-terminal 33 residues, 1-33 (MEARIILLRIQIPWSANRQFSHPPLDFPRFIRA), are a transit peptide targeting the chloroplast. Topologically, residues 34–70 (SSSSTSQKPKTYEGPKPRKNLVADFISKNDDLVRSLP) are stromal. Residues 71-91 (IYVGGASLLAVLFNRTVSGIA) traverse the membrane as a helical segment. Residues 92 to 103 (PVADASSSQSRA) are Lumenal-facing. Residues 104–124 (DLLALGLAVTNLLTGLVWLSI) form a helical membrane-spanning segment. The Stromal segment spans residues 125–297 (RPKSITPVNP…DSDEISRVTV (173 aa)).

The protein resides in the plastid. Its subcellular location is the chloroplast thylakoid membrane. In terms of biological role, required for the biogenesis and accumulation of native cytochrome b6 in the thylakoid membrane. Controls the conversion of apocytochrome b6 to holocytochrome b6. Required for covalent binding of the c-type heme to cytochrome b6. The sequence is that of Protein COFACTOR ASSEMBLY OF COMPLEX C SUBUNIT B CCB4, chloroplastic from Arabidopsis thaliana (Mouse-ear cress).